The chain runs to 198 residues: Prostamide/prostaglandin F synthase (198 aa).

Tyrosine 108 bears the Phosphotyrosine mark.

This sequence belongs to the peroxiredoxin-like PRXL2 family. Prostamide/prostaglandin F synthase subfamily.

The protein localises to the cytoplasm. It is found in the cytosol. It catalyses the reaction prostaglandin H2 + [thioredoxin]-dithiol = prostaglandin F2alpha + [thioredoxin]-disulfide. The enzyme catalyses prostamide F2alpha + [thioredoxin]-disulfide = prostamide H2 + [thioredoxin]-dithiol. Functionally, catalyzes the reduction of prostaglandin-ethanolamide H(2) (prostamide H(2)) to prostamide F(2alpha) with NADPH as proton donor. Also able to reduce prostaglandin H(2) to prostaglandin F(2alpha). The protein is Prostamide/prostaglandin F synthase of Homo sapiens (Human).